The chain runs to 117 residues: Ubiquitin-like protein 3 (117 aa).

Residues 10–88 (INLRLILVSG…PFGKTTVMHL (79 aa)) enclose the Ubiquitin-like domain. Cys113 is lipidated: S-palmitoyl cysteine. Cys114 bears the Cysteine methyl ester mark. The S-geranylgeranyl cysteine moiety is linked to residue Cys114. The propeptide at 115–117 (VIL) is removed in mature form.

It is found in the cell membrane. The protein is Ubiquitin-like protein 3 (Ubl3) of Mus musculus (Mouse).